A 395-amino-acid polypeptide reads, in one-letter code: Tryptophan synthase beta chain (395 aa).

Lysine 86 bears the N6-(pyridoxal phosphate)lysine mark.

It belongs to the TrpB family. Tetramer of two alpha and two beta chains. Requires pyridoxal 5'-phosphate as cofactor.

The catalysed reaction is (1S,2R)-1-C-(indol-3-yl)glycerol 3-phosphate + L-serine = D-glyceraldehyde 3-phosphate + L-tryptophan + H2O. Its pathway is amino-acid biosynthesis; L-tryptophan biosynthesis; L-tryptophan from chorismate: step 5/5. Functionally, the beta subunit is responsible for the synthesis of L-tryptophan from indole and L-serine. This Psychromonas ingrahamii (strain DSM 17664 / CCUG 51855 / 37) protein is Tryptophan synthase beta chain.